The primary structure comprises 348 residues: S-adenosylmethionine-dependent nucleotide dehydratase RSAD2 (348 aa).

The Radical SAM core domain occupies 56-276; that stretch reads SATPSSVNYH…LERHSSISCL (221 aa). Residues Cys-70, Cys-74, and Cys-77 each coordinate [4Fe-4S] cluster.

The protein belongs to the radical SAM superfamily. RSAD2 family. [4Fe-4S] cluster is required as a cofactor. As to expression, expressed at low levels in spleen and head kidney.

It is found in the endoplasmic reticulum membrane. In terms of biological role, interferon-inducible iron-sulfur (4FE-4S) cluster-binding antiviral protein which plays a major role in the cell antiviral state induced by type I and type II interferon. The protein is S-adenosylmethionine-dependent nucleotide dehydratase RSAD2 of Oncorhynchus mykiss (Rainbow trout).